The primary structure comprises 209 residues: Holliday junction branch migration complex subunit RuvA (209 aa).

Residues 1 to 70 form a domain I region; it reads MFSYLKGEAI…EDGTYLYGFA (70 aa). The tract at residues 71-149 is domain II; sequence SAAARDLFRQ…QWRDQFSLPD (79 aa). Residues 149–153 are flexible linker; the sequence is DTAAQ. The segment at 154–209 is domain III; it reads PNAAVHEDLELTLLALGYQETEIRGAIATLSQDSILLQNDNADEWIRRAITLLSQT.

It belongs to the RuvA family. In terms of assembly, homotetramer. Forms an RuvA(8)-RuvB(12)-Holliday junction (HJ) complex. HJ DNA is sandwiched between 2 RuvA tetramers; dsDNA enters through RuvA and exits via RuvB. An RuvB hexamer assembles on each DNA strand where it exits the tetramer. Each RuvB hexamer is contacted by two RuvA subunits (via domain III) on 2 adjacent RuvB subunits; this complex drives branch migration. In the full resolvosome a probable DNA-RuvA(4)-RuvB(12)-RuvC(2) complex forms which resolves the HJ.

The protein resides in the cytoplasm. In terms of biological role, the RuvA-RuvB-RuvC complex processes Holliday junction (HJ) DNA during genetic recombination and DNA repair, while the RuvA-RuvB complex plays an important role in the rescue of blocked DNA replication forks via replication fork reversal (RFR). RuvA specifically binds to HJ cruciform DNA, conferring on it an open structure. The RuvB hexamer acts as an ATP-dependent pump, pulling dsDNA into and through the RuvAB complex. HJ branch migration allows RuvC to scan DNA until it finds its consensus sequence, where it cleaves and resolves the cruciform DNA. This Picosynechococcus sp. (strain ATCC 27264 / PCC 7002 / PR-6) (Agmenellum quadruplicatum) protein is Holliday junction branch migration complex subunit RuvA.